Here is a 294-residue protein sequence, read N- to C-terminus: ATP phosphoribosyltransferase (294 aa).

Belongs to the ATP phosphoribosyltransferase family. Long subfamily. The cofactor is Mg(2+).

Its subcellular location is the cytoplasm. It catalyses the reaction 1-(5-phospho-beta-D-ribosyl)-ATP + diphosphate = 5-phospho-alpha-D-ribose 1-diphosphate + ATP. The protein operates within amino-acid biosynthesis; L-histidine biosynthesis; L-histidine from 5-phospho-alpha-D-ribose 1-diphosphate: step 1/9. Feedback inhibited by histidine. Functionally, catalyzes the condensation of ATP and 5-phosphoribose 1-diphosphate to form N'-(5'-phosphoribosyl)-ATP (PR-ATP). Has a crucial role in the pathway because the rate of histidine biosynthesis seems to be controlled primarily by regulation of HisG enzymatic activity. This chain is ATP phosphoribosyltransferase, found in Chlorobaculum parvum (strain DSM 263 / NCIMB 8327) (Chlorobium vibrioforme subsp. thiosulfatophilum).